A 514-amino-acid chain; its full sequence is Variant surface glycoprotein ILTAT 1.24 (514 aa).

The N-terminal stretch at M1 to A23 is a signal peptide. 2 cysteine pairs are disulfide-bonded: C37–C162 and C143–C204. The N-linked (GlcNAc...) asparagine glycan is linked to N443. Residues G451 to D476 form a disordered region. The span at T455–T464 shows a compositional bias: low complexity. Positions T465–D476 are enriched in basic and acidic residues. Residue D491 is the site of GPI-anchor amidated aspartate attachment. The propeptide at S492 to F514 is removed in mature form.

The protein localises to the cell membrane. VSG forms a coat on the surface of the parasite. The trypanosome evades the immune response of the host by expressing a series of antigenically distinct VSGs from an estimated 1000 VSG genes. In Trypanosoma brucei brucei, this protein is Variant surface glycoprotein ILTAT 1.24.